The following is a 146-amino-acid chain: Hemoglobin subunit beta (146 aa).

Val-1 carries the post-translational modification N-acetylvaline. One can recognise a Globin domain in the interval 2–146; the sequence is HLTGEEKSAV…VANALAHKYH (145 aa). Position 12 is a phosphothreonine (Thr-12). Position 44 is a phosphoserine (Ser-44). The residue at position 59 (Lys-59) is an N6-acetyllysine. His-63 provides a ligand contact to heme b. Residue Lys-82 is modified to N6-acetyllysine. Residue His-92 participates in heme b binding. S-nitrosocysteine is present on Cys-93. The residue at position 144 (Lys-144) is an N6-acetyllysine.

The protein belongs to the globin family. Heterotetramer of two alpha chains and two beta chains. As to expression, red blood cells.

Functionally, involved in oxygen transport from the lung to the various peripheral tissues. This is Hemoglobin subunit beta (HBB) from Leontocebus fuscicollis (Brown-mantled tamarin).